Reading from the N-terminus, the 98-residue chain is NADH-ubiquinone oxidoreductase chain 4L (98 aa).

Transmembrane regions (helical) follow at residues 1 to 21 (MSPILINMLLAFTISLIGLLI), 30 to 50 (LLCLEGMMLSLFILTSTLALT), and 61 to 81 (IILLVFAACEAAIGLSLLVMV).

This sequence belongs to the complex I subunit 4L family. Core subunit of respiratory chain NADH dehydrogenase (Complex I) which is composed of 45 different subunits.

It localises to the mitochondrion inner membrane. It carries out the reaction a ubiquinone + NADH + 5 H(+)(in) = a ubiquinol + NAD(+) + 4 H(+)(out). Its function is as follows. Core subunit of the mitochondrial membrane respiratory chain NADH dehydrogenase (Complex I) which catalyzes electron transfer from NADH through the respiratory chain, using ubiquinone as an electron acceptor. Part of the enzyme membrane arm which is embedded in the lipid bilayer and involved in proton translocation. In Chrysochloris asiatica (Cape golden mole), this protein is NADH-ubiquinone oxidoreductase chain 4L (MT-ND4L).